The chain runs to 311 residues: MRPLAIVGPTGVGKSELALDVIERLGGQVSVEIVNADAMQLYRGMDIGTAKLPVAARRGIPHHQLDVLDVTETATVASYQRTAAADIEAIAARGAVPVVVGGSMLYVQSLLDDWSFPGTDPAVRVRWEQQLAEVGVVRLHAELARRDLAAAAAILPTDGRRTVRALEVVELTGKPFAASAPRIGAPRWDTVIVGLDCDRTILSERLARRIDSMFGQGLVDEVRMLLRWGLRDGVTASRALGYAQVLTALDAGGDADHLDEARQQTYLGHRRYARRQRSWFHRDHRVHWLDVGTVDRVGVVDDALRVWRNAS.

8–15 (GPTGVGKS) provides a ligand contact to ATP. 10–15 (TGVGKS) serves as a coordination point for substrate.

It belongs to the IPP transferase family. Monomer. It depends on Mg(2+) as a cofactor.

The catalysed reaction is adenosine(37) in tRNA + dimethylallyl diphosphate = N(6)-dimethylallyladenosine(37) in tRNA + diphosphate. Functionally, catalyzes the transfer of a dimethylallyl group onto the adenine at position 37 in tRNAs that read codons beginning with uridine, leading to the formation of N6-(dimethylallyl)adenosine (i(6)A). The protein is tRNA dimethylallyltransferase of Mycobacterium leprae (strain Br4923).